A 431-amino-acid chain; its full sequence is Polygalacturonase ADPG1 (431 aa).

A signal peptide spans 1–23 (MARCCRHLAVFLCVLLMLSLCKA). 2 PbH1 repeats span residues 223 to 249 (CNKVEVSNVEITAPGDSPNTDGIHITN) and 250 to 271 (TQNIRVSNSDIGTGDDCISIED). The active-site Proton donor is the Asp264. His287 is a catalytic residue. 3 PbH1 repeats span residues 303–324 (VSGINVDGAKFSESDNGVRIKT), 332–353 (AKNIKFQNIRMENVKNPIIIDQ), and 398–420 (CQGIVLENVKIKGGTASCKNANV).

It belongs to the glycosyl hydrolase 28 family. As to expression, expressed in flower buds and siliques, in the dehiscence zone of anthers (stomium cells) and maturing siliques. Expressed in stigma during pollen tube growth. Not expressed in seeds or in the floral part or leaf abscission zone but found at the junction between the seed and the funiculus at the site of seed abscission.

It localises to the secreted. The protein localises to the cell wall. Its subcellular location is the cytoplasm. It catalyses the reaction (1,4-alpha-D-galacturonosyl)n+m + H2O = (1,4-alpha-D-galacturonosyl)n + (1,4-alpha-D-galacturonosyl)m.. Functionally, polygalacturonase involved in cell separation in the final stages of pod shatter and in anther dehiscence. Not involved in floral organ abscission. The sequence is that of Polygalacturonase ADPG1 (ADPG1) from Arabidopsis thaliana (Mouse-ear cress).